The sequence spans 522 residues: MSVKNNSFSSAEIPDVADQPRDRFNPEATQDLQEKDETKEEKEGDEEVKHDEAEEDQEVVKPNDAEEDDDGDDAEEDEEEEVEAEEDEEAEEEEEEEEEEEEEEEDSKERSPSSISGDQSEFMEIDLGEIRKDVQCPICLGIIKKTRTVMECLHRFCRECIDKSMRLGNNECPACRKHCASRRSLRDDPKFDALIAALFTNIDSYEEEELAFHEDEMARNKQIQASIAQISQRQSEALVKRRSLGKEAAVLMRSPRIASGSRRRRNSRNMEQQNASEAHEDDDNDDNNNRGRDKDSSSDERGTEVRQKKRRKRSTSRSTQHPSSSGANKNNGNCADNDTEVYRDTKGISPGLVWNPEILAWGRGGTRSNTRHGNNTSGGSSKSVRNARVNKLVEYLRSSVDGSSVELDIHVKLVSLDTKCIPDLPQPYLCCRPTLLVKQLREFVALQIHLKTEEVELLVTRRRVGEDAAIENLPAVTPASAAASKDEMLSLEDNETLSRLKIDFISSHEQHLIIAYRKKQTE.

The span at 1-10 (MSVKNNSFSS) shows a compositional bias: polar residues. A disordered region spans residues 1–119 (MSVKNNSFSS…RSPSSISGDQ (119 aa)). A compositionally biased stretch (basic and acidic residues) spans 32 to 64 (LQEKDETKEEKEGDEEVKHDEAEEDQEVVKPND). Positions 65-106 (AEEDDDGDDAEEDEEEEVEAEEDEEAEEEEEEEEEEEEEEED) are enriched in acidic residues. The segment at 136 to 176 (CPICLGIIKKTRTVMECLHRFCRECIDKSMRLGNNECPACR) adopts an RING-type zinc-finger fold. 2 disordered regions span residues 250–347 (VLMR…DTKG) and 363–385 (RGGT…KSVR). The span at 287–306 (NNNRGRDKDSSSDERGTEVR) shows a compositional bias: basic and acidic residues. Residues 316–325 (SRSTQHPSSS) are compositionally biased toward low complexity. 2 stretches are compositionally biased toward polar residues: residues 326–336 (GANKNNGNCAD) and 366–384 (TRSN…SKSV).

Homodimer or heterodimer with RING1B. Interacts with CLF. Component of the PRC1-like complex, at least composed of RING1A, RING1B and LHP1.

Its subcellular location is the nucleus. It carries out the reaction S-ubiquitinyl-[E2 ubiquitin-conjugating enzyme]-L-cysteine + [acceptor protein]-L-lysine = [E2 ubiquitin-conjugating enzyme]-L-cysteine + N(6)-ubiquitinyl-[acceptor protein]-L-lysine.. Its pathway is protein modification; protein ubiquitination. In terms of biological role, putative E3 ubiquitin-protein ligase that mediates monoubiquitination of 'Lys-119' of histone H2A (H2AK119ub), thereby playing a central role in histone code and gene regulation. Functionally, as part of the PRC1-like complex, repress class I KNOX gene expression. PcG PRC1 complex maintains the transcriptionally repressive state of many genes, including Hox genes, throughout development. PcG PRC1 complex acts via chromatin remodeling and modification of histones, rendering chromatin heritably changed in its expressibility. This is Putative E3 ubiquitin-protein ligase RING1a (RING1A) from Arabidopsis thaliana (Mouse-ear cress).